Here is a 205-residue protein sequence, read N- to C-terminus: Outer-membrane lipoprotein carrier protein (205 aa).

Positions 1–22 are cleaved as a signal peptide; that stretch reads MKKTTLKFAALTLLGLSNLALA.

Belongs to the LolA family. In terms of assembly, monomer.

Its subcellular location is the periplasm. In terms of biological role, participates in the translocation of lipoproteins from the inner membrane to the outer membrane. Only forms a complex with a lipoprotein if the residue after the N-terminal Cys is not an aspartate (The Asp acts as a targeting signal to indicate that the lipoprotein should stay in the inner membrane). This chain is Outer-membrane lipoprotein carrier protein, found in Haemophilus influenzae (strain PittEE).